Reading from the N-terminus, the 177-residue chain is Large ribosomal subunit protein uL6 (177 aa).

This sequence belongs to the universal ribosomal protein uL6 family. As to quaternary structure, part of the 50S ribosomal subunit.

Its function is as follows. This protein binds to the 23S rRNA, and is important in its secondary structure. It is located near the subunit interface in the base of the L7/L12 stalk, and near the tRNA binding site of the peptidyltransferase center. In Methylocella silvestris (strain DSM 15510 / CIP 108128 / LMG 27833 / NCIMB 13906 / BL2), this protein is Large ribosomal subunit protein uL6.